A 102-amino-acid polypeptide reads, in one-letter code: CRISPR-associated endoribonuclease Cas2 (102 aa).

Residue Asp8 participates in Mg(2+) binding.

The protein belongs to the CRISPR-associated endoribonuclease Cas2 protein family. Homodimer, forms a heterotetramer with a Cas1 homodimer. The cofactor is Mg(2+).

Functionally, CRISPR (clustered regularly interspaced short palindromic repeat), is an adaptive immune system that provides protection against mobile genetic elements (viruses, transposable elements and conjugative plasmids). CRISPR clusters contain sequences complementary to antecedent mobile elements and target invading nucleic acids. CRISPR clusters are transcribed and processed into CRISPR RNA (crRNA). Functions as a ssRNA-specific endoribonuclease. Involved in the integration of spacer DNA into the CRISPR cassette. The polypeptide is CRISPR-associated endoribonuclease Cas2 (Acidovorax ebreus (strain TPSY) (Diaphorobacter sp. (strain TPSY))).